Reading from the N-terminus, the 488-residue chain is uncharacterized protein (488 aa).

The protein belongs to the IIV-6 467R family.

This is an uncharacterized protein from Invertebrate iridescent virus 3 (IIV-3).